The following is a 148-amino-acid chain: Calcium-permeable cation-selective channel WeiTsing (148 aa).

Topologically, residues Met1–Ser25 are cytoplasmic. The helical transmembrane segment at Ala26 to Val46 threads the bilayer. At Ser47–Ser51 the chain is on the lumenal side. The chain crosses the membrane as a helical span at residues Val52–Val72. Residues Leu73 to Arg90 lie on the Cytoplasmic side of the membrane. The helical transmembrane segment at Leu91–Val110 threads the bilayer. Over Val111–Ser116 the chain is Lumenal. The chain crosses the membrane as a helical span at residues Ile117–Leu133. The Cytoplasmic portion of the chain corresponds to Glu134–Val148.

As to quaternary structure, forms pentamers with a central pore to produce an ion channel.

It localises to the endoplasmic reticulum membrane. The catalysed reaction is Ca(2+)(in) = Ca(2+)(out). The enzyme catalyses Na(+)(in) = Na(+)(out). Functionally, calcium-permeable cation-selective channel conferring a broad-spectrum clubroot resistance by supporting cytosolic Ca(2+) increase in root pericycle cells. Triggers immunity toward fungal pathogens such as Plasmodiophora brassicae (Pb) and induces defenses. Also permeable to sodium ion Na(+) and possibly other cations. In Arabidopsis thaliana (Mouse-ear cress), this protein is Calcium-permeable cation-selective channel WeiTsing.